We begin with the raw amino-acid sequence, 209 residues long: Large ribosomal subunit protein bL25 (209 aa).

Positions 188-209 are disordered; that stretch reads STSMEKEGEGSQEPTAAPSSEN. Polar residues predominate over residues 199–209; the sequence is QEPTAAPSSEN.

This sequence belongs to the bacterial ribosomal protein bL25 family. CTC subfamily. Part of the 50S ribosomal subunit; part of the 5S rRNA/L5/L18/L25 subcomplex. Contacts the 5S rRNA. Binds to the 5S rRNA independently of L5 and L18.

Its function is as follows. This is one of the proteins that binds to the 5S RNA in the ribosome where it forms part of the central protuberance. This Ehrlichia canis (strain Jake) protein is Large ribosomal subunit protein bL25.